Here is a 493-residue protein sequence, read N- to C-terminus: NADH-quinone oxidoreductase subunit N (493 aa).

14 helical membrane-spanning segments follow: residues 8–28 (ALLP…AIAI), 34–54 (LVFW…PHAS), 71–91 (GLFF…LCLA), 102–122 (EIFV…SSAH), 123–143 (LAMF…MIAY), 157–177 (YLML…MVYG), 200–220 (ALAG…LVPF), 232–252 (PTPV…ALLL), 266–286 (FLCV…LLAL), 294–314 (LLAY…VAAG), 325–345 (IAFY…AISA), 370–390 (AAVL…VGFV), 405–427 (WPLV…RVVL), and 443–463 (PAAG…GLFP). Positions 473–493 (VPQPPPTADSPQRLTATGGLP) are disordered.

This sequence belongs to the complex I subunit 2 family. As to quaternary structure, NDH-1 is composed of 14 different subunits. Subunits NuoA, H, J, K, L, M, N constitute the membrane sector of the complex.

It localises to the cell inner membrane. The catalysed reaction is a quinone + NADH + 5 H(+)(in) = a quinol + NAD(+) + 4 H(+)(out). Its function is as follows. NDH-1 shuttles electrons from NADH, via FMN and iron-sulfur (Fe-S) centers, to quinones in the respiratory chain. The immediate electron acceptor for the enzyme in this species is believed to be ubiquinone. Couples the redox reaction to proton translocation (for every two electrons transferred, four hydrogen ions are translocated across the cytoplasmic membrane), and thus conserves the redox energy in a proton gradient. The chain is NADH-quinone oxidoreductase subunit N from Methylococcus capsulatus (strain ATCC 33009 / NCIMB 11132 / Bath).